The sequence spans 434 residues: MKHSKKIIFALLALAMSNTSMAAPMPLDRVSVQINDGIILESEITNMVSTVKANAKAANQTLPSDDALRTQVIERLILTHLQMQMAERIGLQIGDLQLDQTIENIAKEQKVTVAQMQQTIESEGTSFSQYREQLRQEVTLGEIQRIQVQRRIQVSPQEISGLVKLIQEQGLKDVEFQIGHILIEVPSNPTSEQLEGASRRAEIVLKRLNNGDDFRSTAIASSSGPKALEGGIWDFMNINEMPTLFAEVISNAKKGDIIGPIKSGSGFHIIKVVDTRGLQTQEVEEVKSRHILLKPSPILSEDRAKAMLANFLAQVRAGDADFAKLATQYSEDPGSAAKGGELGWADPSMYVPEFTQTLASLQEGQYSEPFRTTHGWHVVQLESRRKTDATEQFNSNRAHQLIFRRKFNEELQNWLDEMRSEAYIEIVEPESKRG.

A signal peptide spans 1–22 (MKHSKKIIFALLALAMSNTSMA). 2 consecutive PpiC domains span residues 173-274 (DVEF…KVVD) and 283-383 (VEEV…QLES).

Its subcellular location is the periplasm. The enzyme catalyses [protein]-peptidylproline (omega=180) = [protein]-peptidylproline (omega=0). Chaperone involved in the correct folding and assembly of outer membrane proteins. Recognizes specific patterns of aromatic residues and the orientation of their side chains, which are found more frequently in integral outer membrane proteins. May act in both early periplasmic and late outer membrane-associated steps of protein maturation. The polypeptide is Chaperone SurA (Shewanella frigidimarina (strain NCIMB 400)).